Reading from the N-terminus, the 263-residue chain is Glutathione S-transferase F8, chloroplastic (263 aa).

The transit peptide at 1-49 (MGAIQARLPLFLSPPSIKHHTFLHSSSSNSNFKIRSNKSSSSSSSSIIM) directs the protein to the chloroplast. The region spanning 50–131 (ASIKVHGVPM…YLAEEYSEKG (82 aa)) is the GST N-terminal domain. Residues 60–61 (ST), 89–90 (HK), 102–103 (QI), and 115–116 (ES) each bind glutathione. A GST C-terminal domain is found at 139-263 (CKKVKATTNV…WAKVIDLQKQ (125 aa)). T177 bears the Phosphothreonine mark.

The protein belongs to the GST superfamily. Phi family. In terms of tissue distribution, isoform 1 is predominantly expressed in leaves and isoform 2 in roots.

The protein localises to the plastid. It localises to the chloroplast. The protein resides in the cytoplasm. Its subcellular location is the cytosol. It carries out the reaction RX + glutathione = an S-substituted glutathione + a halide anion + H(+). In terms of biological role, in vitro, possesses glutathione S-transferase activity toward 1-chloro-2,4-dinitrobenzene (CDNB) and glutathione peroxidase activity toward cumene hydroperoxide and linoleic acid-13-hydroperoxide. May be involved in the conjugation of reduced glutathione to a wide number of exogenous and endogenous hydrophobic electrophiles and have a detoxification role against certain herbicides. The sequence is that of Glutathione S-transferase F8, chloroplastic (GSTF8) from Arabidopsis thaliana (Mouse-ear cress).